Here is a 1315-residue protein sequence, read N- to C-terminus: Tetratricopeptide repeat protein 21B (1315 aa).

TPR repeat units follow at residues 108 to 141, 145 to 178, 192 to 225, 285 to 323, 324 to 357, 492 to 525, 563 to 596, 616 to 649, 721 to 754, 756 to 788, 790 to 821, 830 to 863, 883 to 916, 918 to 950, 951 to 984, 1022 to 1055, 1196 to 1229, 1231 to 1263, and 1265 to 1298; these read RKAL…PHDS, PILK…GNDI, QNYS…QLAL, AQLF…TPQQ, AEIA…NESN, PQAV…SPSY, PLYH…PGMR, LSIF…FSGT, PRSF…NPKD, TLAR…GQQN, LCYD…EPVS, GRSQ…QARI, AEIC…CETD, KIML…DQDN, EPAT…KPDN, PGFQ…SDWG, EKSW…NRSC, KAYE…SNQT, and PAVG…HPTY.

The protein belongs to the TTC21 family. In terms of assembly, component of the IFT complex A (IFT-A) complex. IFT-A complex is divided into a core subcomplex composed of IFT122:IFT140:WDR19 which is associated with TULP3 and a peripheral subcomplex composed of IFT43:WDR35:TTC21B. Interacts directy with WDR35 and TTC21B. Interacts with TTC25.

The protein localises to the cytoplasm. It localises to the cytoskeleton. Its subcellular location is the cilium axoneme. Its function is as follows. Component of the IFT complex A (IFT-A), a complex required for retrograde ciliary transport and entry into cilia of G protein-coupled receptors (GPCRs). Essential for retrograde trafficking of IFT-1, IFT-B and GPCRs. Negatively modulates the SHH signal transduction. In Mus musculus (Mouse), this protein is Tetratricopeptide repeat protein 21B (Ttc21b).